We begin with the raw amino-acid sequence, 259 residues long: Carbonic anhydrase 1 (259 aa).

Ala-1 bears the N-acetylalanine mark. The Alpha-carbonic anhydrase domain occupies 2–258; the sequence is HAWGYGPTDG…LKGRHVRASF (257 aa). The active-site Proton donor/acceptor is His-63. Zn(2+)-binding residues include His-93, His-95, and His-118. Substrate contacts are provided by residues Thr-197 and 197 to 198; that span reads TT.

The protein belongs to the alpha-carbonic anhydrase family. The cofactor is Zn(2+).

It localises to the cytoplasm. The catalysed reaction is hydrogencarbonate + H(+) = CO2 + H2O. Catalyzes the reversible hydration of carbon dioxide. The protein is Carbonic anhydrase 1 (ca1) of Chionodraco hamatus (Antarctic teleost icefish).